The primary structure comprises 215 residues: 3-demethoxyubiquinol 3-hydroxylase (215 aa).

Fe cation-binding residues include E64, E94, H97, E146, E178, and H181.

Belongs to the COQ7 family. Fe cation is required as a cofactor.

Its subcellular location is the cell membrane. The enzyme catalyses a 5-methoxy-2-methyl-3-(all-trans-polyprenyl)benzene-1,4-diol + AH2 + O2 = a 3-demethylubiquinol + A + H2O. It functions in the pathway cofactor biosynthesis; ubiquinone biosynthesis. Functionally, catalyzes the hydroxylation of 2-nonaprenyl-3-methyl-6-methoxy-1,4-benzoquinol during ubiquinone biosynthesis. The sequence is that of 3-demethoxyubiquinol 3-hydroxylase from Pseudomonas paraeruginosa (strain DSM 24068 / PA7) (Pseudomonas aeruginosa (strain PA7)).